A 117-amino-acid chain; its full sequence is Large ribosomal subunit protein uL18 (117 aa).

The protein belongs to the universal ribosomal protein uL18 family. Part of the 50S ribosomal subunit; part of the 5S rRNA/L5/L18/L25 subcomplex. Contacts the 5S and 23S rRNAs.

Functionally, this is one of the proteins that bind and probably mediate the attachment of the 5S RNA into the large ribosomal subunit, where it forms part of the central protuberance. The protein is Large ribosomal subunit protein uL18 of Cronobacter sakazakii (strain ATCC BAA-894) (Enterobacter sakazakii).